The chain runs to 98 residues: Tan_12Cys (98 aa).

Residues 1-21 (MNLKVLFLLAMVLVTLCLGED) form the signal peptide. The propeptide occupies 22 to 28 (RVTDRRK).

This sequence belongs to the teretoxin C (TC) superfamily. Contains 6 disulfide bonds. In terms of tissue distribution, expressed by the venom duct.

It localises to the secreted. The chain is Tan_12Cys from Terebra anilis (Auger snail).